Here is a 717-residue protein sequence, read N- to C-terminus: SAGA factor-like TAF6 (717 aa).

The interval K123–S204 is sufficient for interaction with Taf9.

This sequence belongs to the TAF6 family. As to quaternary structure, component of the Spt-Ada-Gcn5 acetyltransferase (SAGA) complex consisting of wda/Taf5L, Saf6, Taf9, Taf10b, Taf12, Ada1, Spt3, Spt7, Spt20, Sf3b3, Sf3b5, Nipped-A/Tra1, a histone acetyltransferase (HAT) module made up of Gcn5, Ada2b (Isoform B), Ada3 and Sgf29, and a deubiquitinase (DUB) module made up of not/nonstop, Sgf11 and e(y)2 tethered to SAGA by Atxn7; not essential for SAGA complex assembly, histone-modifying activity or chromosomal recruitment. Interacts (via N-terminal histone-fold domain) with Taf9 (via N-terminal histone-fold domain); the interaction is probably direct. Probably forms a histone-like heterooctamer structure with Taf9, Taf12 and Taf10b.

The protein resides in the nucleus. It localises to the chromosome. Its function is as follows. Component of the transcription regulatory complex SAGA, a multiprotein complex that activates transcription by remodeling chromatin and mediating histone acetylation and deubiquitination. The SAGA complex predominantly acetylates histone H3. Involved in SAGA complex coactivator function but not essential for SAGA complex assembly, histone-modifying activity or chromosomal recruitment. Required for oogenesis; involved in transcriptional activation. The sequence is that of SAGA factor-like TAF6 from Drosophila melanogaster (Fruit fly).